The sequence spans 137 residues: Transcription antitermination protein NusB (137 aa).

The protein belongs to the NusB family.

Involved in transcription antitermination. Required for transcription of ribosomal RNA (rRNA) genes. Binds specifically to the boxA antiterminator sequence of the ribosomal RNA (rrn) operons. The polypeptide is Transcription antitermination protein NusB (Clavibacter michiganensis subsp. michiganensis (strain NCPPB 382)).